The primary structure comprises 470 residues: Ribulose bisphosphate carboxylase large chain (470 aa).

The residue at position 5 (K5) is an N6,N6,N6-trimethyllysine. Residues N114 and T164 each contribute to the substrate site. Residue K166 is the Proton acceptor of the active site. K168 lines the substrate pocket. Positions 192, 194, and 195 each coordinate Mg(2+). Residue K192 is modified to N6-carboxylysine. The Proton acceptor role is filled by H285. Positions 286, 318, and 370 each coordinate substrate.

This sequence belongs to the RuBisCO large chain family. Type I subfamily. In terms of assembly, heterohexadecamer of 8 large chains and 8 small chains; disulfide-linked. The disulfide link is formed within the large subunit homodimers. Requires Mg(2+) as cofactor. The disulfide bond which can form in the large chain dimeric partners within the hexadecamer appears to be associated with oxidative stress and protein turnover.

It is found in the plastid. Its subcellular location is the chloroplast. The enzyme catalyses 2 (2R)-3-phosphoglycerate + 2 H(+) = D-ribulose 1,5-bisphosphate + CO2 + H2O. The catalysed reaction is D-ribulose 1,5-bisphosphate + O2 = 2-phosphoglycolate + (2R)-3-phosphoglycerate + 2 H(+). Its function is as follows. RuBisCO catalyzes two reactions: the carboxylation of D-ribulose 1,5-bisphosphate, the primary event in carbon dioxide fixation, as well as the oxidative fragmentation of the pentose substrate in the photorespiration process. Both reactions occur simultaneously and in competition at the same active site. The chain is Ribulose bisphosphate carboxylase large chain from Kigelia africana (Sausage tree).